A 595-amino-acid polypeptide reads, in one-letter code: Aspartate--tRNA(Asp/Asn) ligase (595 aa).

An L-aspartate-binding site is contributed by Glu-177. The interval 201–204 (QQFK) is aspartate. Arg-223 is a binding site for L-aspartate. Residues 223–225 (RDE) and Gln-232 contribute to the ATP site. Residue His-455 participates in L-aspartate binding. ATP is bound at residue Glu-489. Arg-496 contributes to the L-aspartate binding site. Position 542 to 545 (542 to 545 (GLDR)) interacts with ATP.

Belongs to the class-II aminoacyl-tRNA synthetase family. Type 1 subfamily. As to quaternary structure, homodimer.

Its subcellular location is the cytoplasm. It catalyses the reaction tRNA(Asx) + L-aspartate + ATP = L-aspartyl-tRNA(Asx) + AMP + diphosphate. Its function is as follows. Aspartyl-tRNA synthetase with relaxed tRNA specificity since it is able to aspartylate not only its cognate tRNA(Asp) but also tRNA(Asn). Reaction proceeds in two steps: L-aspartate is first activated by ATP to form Asp-AMP and then transferred to the acceptor end of tRNA(Asp/Asn). This chain is Aspartate--tRNA(Asp/Asn) ligase, found in Opitutus terrae (strain DSM 11246 / JCM 15787 / PB90-1).